The following is a 922-amino-acid chain: Metabotropic glutamate receptor 7 (922 aa).

An N-terminal signal peptide occupies residues 1-34 (MVQLRKLLRVLTLMKFPCCVLEVLLCALAAAARG). Residues 35-590 (QEMYAPHSIR…IIKLEWHSPW (556 aa)) are Extracellular-facing. Cys-67 and Cys-109 are oxidised to a cystine. Asn-98 carries an N-linked (GlcNAc...) asparagine glycan. L-glutamate-binding positions include Ser-159, 180 to 182 (AST), Tyr-230, and Asp-314. 7 disulfides stabilise this stretch: Cys-249-Cys-541, Cys-374-Cys-390, Cys-430-Cys-437, Cys-523-Cys-542, Cys-527-Cys-545, Cys-548-Cys-560, and Cys-563-Cys-576. Lys-407 contributes to the L-glutamate binding site. N-linked (GlcNAc...) asparagine glycosylation is found at Asn-458 and Asn-486. N-linked (GlcNAc...) asparagine glycosylation is present at Asn-572. The helical transmembrane segment at 591 to 615 (AVIPVFLAMLGIIATIFVMATFIRY) threads the bilayer. Residues 616–627 (NDTPIVRASGRE) are Cytoplasmic-facing. A helical membrane pass occupies residues 628–648 (LSYVLLTGIFLCYIITFLMIA). The Extracellular segment spans residues 649 to 654 (KPDVAV). The chain crosses the membrane as a helical span at residues 655–675 (CSFRRVFLGLGMCISYAALLT). Topologically, residues 676–702 (KTNRIYRIFEQGKKSVTAPRLISPTSQ) are cytoplasmic. A helical membrane pass occupies residues 703–723 (LAITSSLISVQLLGVFIWFGV). Residues 724–753 (DPPNIIIDYDEHKTMNPEQARGVLKCDITD) lie on the Extracellular side of the membrane. The chain crosses the membrane as a helical span at residues 754–775 (LQIICSLGYSILLMVTCTVYAI). Residues 776 to 788 (KTRGVPENFNEAK) lie on the Cytoplasmic side of the membrane. Residues 789-810 (PIGFTMYTTCIVWLAFIPIFFG) form a helical membrane-spanning segment. The Extracellular segment spans residues 811-825 (TAQSAEKLYIQTTTL). Residues 826-850 (TISMNLSASVALGMLYMPKVYIIIF) form a helical membrane-spanning segment. The Cytoplasmic portion of the chain corresponds to 851 to 922 (HPELNVQKRK…VTWYTIPPTV (72 aa)).

This sequence belongs to the G-protein coupled receptor 3 family. In terms of assembly, homodimer. Interacts with PICK1.

It is found in the cell membrane. Functionally, G-protein coupled receptor activated by glutamate that regulates axon outgrowth through the MAPK-cAMP-PKA signaling pathway during neuronal development. Ligand binding causes a conformation change that triggers signaling via guanine nucleotide-binding proteins (G proteins) and modulates the activity of downstream effectors, such as adenylate cyclase that it inhibits. The sequence is that of Metabotropic glutamate receptor 7 (GRM7) from Pongo abelii (Sumatran orangutan).